The primary structure comprises 370 residues: Chaperone protein DnaJ (370 aa).

The J domain occupies 6-70 (DFYEILGVSK…QKRANYDQFG (65 aa)). A CR-type zinc finger spans residues 134-216 (GANKSVTLNV…CHGKGFNTKR (83 aa)). 8 residues coordinate Zn(2+): Cys-147, Cys-150, Cys-164, Cys-167, Cys-190, Cys-193, Cys-204, and Cys-207. CXXCXGXG motif repeat units lie at residues 147–154 (CTSCHGSG), 164–171 (CSRCGGTG), 190–197 (CPDCGGSG), and 204–211 (CGECHGKG).

It belongs to the DnaJ family. As to quaternary structure, homodimer. Zn(2+) is required as a cofactor.

The protein localises to the cytoplasm. In terms of biological role, participates actively in the response to hyperosmotic and heat shock by preventing the aggregation of stress-denatured proteins and by disaggregating proteins, also in an autonomous, DnaK-independent fashion. Unfolded proteins bind initially to DnaJ; upon interaction with the DnaJ-bound protein, DnaK hydrolyzes its bound ATP, resulting in the formation of a stable complex. GrpE releases ADP from DnaK; ATP binding to DnaK triggers the release of the substrate protein, thus completing the reaction cycle. Several rounds of ATP-dependent interactions between DnaJ, DnaK and GrpE are required for fully efficient folding. Also involved, together with DnaK and GrpE, in the DNA replication of plasmids through activation of initiation proteins. The polypeptide is Chaperone protein DnaJ (Erysipelothrix rhusiopathiae).